The chain runs to 336 residues: DNA-directed RNA polymerase subunit alpha (336 aa).

Positions Met-1–Leu-234 are alpha N-terminal domain (alpha-NTD). The segment at Val-269 to Glu-336 is alpha C-terminal domain (alpha-CTD).

This sequence belongs to the RNA polymerase alpha chain family. As to quaternary structure, homodimer. The RNAP catalytic core consists of 2 alpha, 1 beta, 1 beta' and 1 omega subunit. When a sigma factor is associated with the core the holoenzyme is formed, which can initiate transcription.

The catalysed reaction is RNA(n) + a ribonucleoside 5'-triphosphate = RNA(n+1) + diphosphate. In terms of biological role, DNA-dependent RNA polymerase catalyzes the transcription of DNA into RNA using the four ribonucleoside triphosphates as substrates. In Thermotoga petrophila (strain ATCC BAA-488 / DSM 13995 / JCM 10881 / RKU-1), this protein is DNA-directed RNA polymerase subunit alpha.